The chain runs to 247 residues: Probable dihydroorotate dehydrogenase B (NAD(+)), electron transfer subunit (247 aa).

Residues 1–87 form the FAD-binding FR-type domain; sequence MLRRVSIEET…RGPYGHGFSG (87 aa). Residues cysteine 201, cysteine 206, cysteine 209, and cysteine 217 each contribute to the [2Fe-2S] cluster site.

It belongs to the PyrK family. In terms of assembly, heterotetramer of 2 PyrK and 2 PyrD type B subunits. [2Fe-2S] cluster is required as a cofactor. FAD serves as cofactor.

It participates in pyrimidine metabolism; UMP biosynthesis via de novo pathway; orotate from (S)-dihydroorotate (NAD(+) route): step 1/1. Responsible for channeling the electrons from the oxidation of dihydroorotate from the FMN redox center in the PyrD type B subunit to the ultimate electron acceptor NAD(+). The sequence is that of Probable dihydroorotate dehydrogenase B (NAD(+)), electron transfer subunit from Pyrococcus furiosus (strain ATCC 43587 / DSM 3638 / JCM 8422 / Vc1).